The following is a 117-amino-acid chain: Large ribosomal subunit protein bL20 (117 aa).

It belongs to the bacterial ribosomal protein bL20 family.

Binds directly to 23S ribosomal RNA and is necessary for the in vitro assembly process of the 50S ribosomal subunit. It is not involved in the protein synthesizing functions of that subunit. The protein is Large ribosomal subunit protein bL20 of Brachyspira hyodysenteriae (strain ATCC 49526 / WA1).